We begin with the raw amino-acid sequence, 809 residues long: Acyl-homoserine lactone acylase QuiP (809 aa).

Positions 1–26 (MASPAFSHFLPRFGVAAAVASALSLA) are cleaved as a signal peptide. The Nucleophile role is filled by serine 261.

Belongs to the peptidase S45 family. In terms of assembly, heterodimer of an alpha subunit and a beta subunit processed from the same precursor.

The protein localises to the periplasm. It carries out the reaction an N-acyl-L-homoserine lactone + H2O = L-homoserine lactone + a carboxylate. Functionally, catalyzes the deacylation of acyl-homoserine lactone (AHL or acyl-HSL), releasing homoserine lactone (HSL) and the corresponding fatty acid. Possesses a specificity for the degradation of long-chain acyl-HSLs (side chains of seven or more carbons in length). In Pseudomonas fluorescens (strain ATCC BAA-477 / NRRL B-23932 / Pf-5), this protein is Acyl-homoserine lactone acylase QuiP (quiP).